A 99-amino-acid chain; its full sequence is DNA-directed RNA polymerase subunit omega (99 aa).

The protein belongs to the RNA polymerase subunit omega family. In terms of assembly, the RNAP catalytic core consists of 2 alpha, 1 beta, 1 beta' and 1 omega subunit. When a sigma factor is associated with the core the holoenzyme is formed, which can initiate transcription.

It carries out the reaction RNA(n) + a ribonucleoside 5'-triphosphate = RNA(n+1) + diphosphate. Promotes RNA polymerase assembly. Latches the N- and C-terminal regions of the beta' subunit thereby facilitating its interaction with the beta and alpha subunits. This chain is DNA-directed RNA polymerase subunit omega, found in Xylella fastidiosa (strain Temecula1 / ATCC 700964).